Reading from the N-terminus, the 860-residue chain is Eukaryotic translation initiation factor 3 subunit C (860 aa).

Residues 1-79 (MSSRFFHGGS…ESDEEEDRVT (79 aa)) form a disordered region. 2 stretches are compositionally biased toward acidic residues: residues 16–53 (SSDE…DDEA) and 67–76 (DLDESDEEED). The region spanning 598–772 (FHMHINLELL…NAIVFRKGVE (175 aa)) is the PCI domain. The segment at 808–860 (AFQRDQGPGGRLGRGQGRGGQRTAGGRPPIGGQQRRPGGQQFSGGALGGAIKA) is disordered. Positions 814–830 (GPGGRLGRGQGRGGQRT) are enriched in gly residues. Residues 831–847 (AGGRPPIGGQQRRPGGQ) are compositionally biased toward low complexity. Over residues 848 to 860 (QFSGGALGGAIKA) the composition is skewed to gly residues.

Belongs to the eIF-3 subunit C family. In terms of assembly, component of the eukaryotic translation initiation factor 3 (eIF-3) complex.

The protein resides in the cytoplasm. Functionally, component of the eukaryotic translation initiation factor 3 (eIF-3) complex, which is involved in protein synthesis of a specialized repertoire of mRNAs and, together with other initiation factors, stimulates binding of mRNA and methionyl-tRNAi to the 40S ribosome. The eIF-3 complex specifically targets and initiates translation of a subset of mRNAs involved in cell proliferation. This chain is Eukaryotic translation initiation factor 3 subunit C, found in Coccidioides immitis (strain RS) (Valley fever fungus).